The chain runs to 134 residues: ATP synthase epsilon chain (134 aa).

This sequence belongs to the ATPase epsilon chain family. In terms of assembly, F-type ATPases have 2 components, CF(1) - the catalytic core - and CF(0) - the membrane proton channel. CF(1) has five subunits: alpha(3), beta(3), gamma(1), delta(1), epsilon(1). CF(0) has three main subunits: a, b and c. In this bacterium the a and b subunits are transcribed but do not seem to be translated, thus the ATP synthase consists of the alpha, beta, gamma, delta, epsilon and c subunits.

The protein localises to the cell membrane. Functionally, produces ATP from ADP in the presence of a proton gradient across the membrane. This is ATP synthase epsilon chain from Moorella thermoacetica (strain ATCC 39073 / JCM 9320).